The chain runs to 225 residues: Ribonuclease T (225 aa).

Positions Met1 to His21 are disordered. An Exonuclease domain is found at Val33–Phe207. Asp36, Glu38, His194, and Asp199 together coordinate Mg(2+). His194 serves as the catalytic Proton donor/acceptor.

The protein belongs to the RNase T family. Homodimer. The cofactor is Mg(2+).

Functionally, trims short 3' overhangs of a variety of RNA species, leaving a one or two nucleotide 3' overhang. Responsible for the end-turnover of tRNA: specifically removes the terminal AMP residue from uncharged tRNA (tRNA-C-C-A). Also appears to be involved in tRNA biosynthesis. The protein is Ribonuclease T of Pseudomonas syringae pv. tomato (strain ATCC BAA-871 / DC3000).